Consider the following 2026-residue polypeptide: Fatty acid synthase subunit beta (2026 aa).

Residues 148–526 (ILMAFGGQGS…VDGRGVRIIA (379 aa)) form an acetyltransferase (AT) domain region. S268 acts as the For acetyltransferase activity in catalysis. Positions 579 to 824 (SQLLQAPPII…LILAAAGVAD (246 aa)) are enoyl reductase (ER) domain. A dehydratase (DH) domain region spans residues 1130 to 1604 (SQVTGSVRSA…LPGDQLTVRI (475 aa)). The 114-residue stretch at 1512–1625 (PGLIDNGSRT…LSVAAYREGT (114 aa)) folds into the MaoC-like domain. A malonyl/palmitoyl transferase (MT/PT) domain region spans residues 1643–2016 (YLFTGQGSQA…LEEAAAVTGS (374 aa)). The active-site For malonyltransferase activity is S1788.

The protein belongs to the fungal fatty acid synthetase subunit beta family. As to quaternary structure, [Alpha(6)beta(6)] hexamers of two multifunctional subunits (alpha and beta).

The enzyme catalyses acetyl-CoA + n malonyl-CoA + 2n NADPH + 4n H(+) = a long-chain-acyl-CoA + n CoA + n CO2 + 2n NADP(+).. It carries out the reaction holo-[ACP] + acetyl-CoA = acetyl-[ACP] + CoA. The catalysed reaction is holo-[ACP] + malonyl-CoA = malonyl-[ACP] + CoA. It catalyses the reaction a (3R)-hydroxyacyl-[ACP] = a (2E)-enoyl-[ACP] + H2O. The enzyme catalyses a 2,3-saturated acyl-[ACP] + NAD(+) = a (2E)-enoyl-[ACP] + NADH + H(+). It carries out the reaction (9Z)-octadecenoyl-[ACP] + H2O = (9Z)-octadecenoate + holo-[ACP] + H(+). It participates in secondary metabolite biosynthesis. Fatty acid synthase beta subunit; part of the gene cluster that mediates the biosynthesis of oryzines, natural products with an unusual maleidride backbone. The two subunits of the fungal fatty acid synthase oryfasA and oryfasB probably form octenoic acid. This fatty acid is most likely activated by the acyl-CoA ligase oryP to give octenyl-CoA before the citrate synthase-like protein oryE catalyzes condensation with oxaloacetate to form tricarboxylic acid. The next steps of the pathways are conjectural, but a favorite possible route has been proposed, beginning with decarboxylation and concomitant dehydration by the decarboxylase oryM, followed by tautomerization, which may lead to the production of a diene intermediate. Reduction of this diene intermediate could give the known metabolite piliformic acid. On the pathway to oryzine B and oryzine A, however, hydroxylation of the diene by the alpha-ketoglutarate-dependent dioxygenase oryG and lactonisation by the lactonohydrolases oryH or oryL could give oryzine B directly. Finally, enoyl reduction by the dehydrogenase oryD would then convert oryzine B into oryzine A. This is Fatty acid synthase subunit beta from Aspergillus oryzae (strain ATCC 42149 / RIB 40) (Yellow koji mold).